The primary structure comprises 264 residues: MDREPLSSGRLHCSARYKHKRSASSSSAGTTSSGHKDRRSDYDYCGSRRHQRSSSRRRSRSRSSSESPPPEPRHRSGRSSRDRERMHKSREHPQASRCIGVFGLNTNTSQHKVRELFNKYGPIERIQMVIDAQTQRSRGFCFIYFEKLSDARAAKDSCSGIEVDGRRIRVDFSITQRAHTPTPGVYLGRQPRGKAPRSFSPRRGRRVYHDRSASPYDNYRDRYDYRNDRYDRNLRRSPSRNRYTRNRSYSRSRSPQLRRTSSRY.

The disordered stretch occupies residues Met1 to Ser96. Basic residues predominate over residues Cys13–Ser22. The segment covering Ala23–Ser33 has biased composition (low complexity). Residue Ser40 is modified to Phosphoserine. The span at Ser47–Ser61 shows a compositional bias: basic residues. Residues Glu71–Arg85 are compositionally biased toward basic and acidic residues. The region spanning Arg97–Thr175 is the RRM domain. Residues Gln176–Pro196 form a linker region. The segment at His179–Tyr264 is disordered. The residue at position 180 (Thr180) is a Phosphothreonine. Over residues Pro191–Arg206 the composition is skewed to basic residues. Residues Val207–Leu234 are compositionally biased toward basic and acidic residues. Phosphoserine is present on residues Ser212 and Ser214. Over residues Arg235–Ser250 the composition is skewed to basic residues. The residue at position 254 (Ser254) is a Phosphoserine.

The protein belongs to the splicing factor SR family. Extensively phosphorylated on serine residues in the RS domain. As to expression, isoform Tmaj and isoform Tmin are expressed in males and females. Isoform msTmaj and isoform msTmin are present only in male germ cells.

In terms of biological role, required for female sex determination in somatic cells and for spermatogenesis in male germ cells. Positive regulator of female-specific splicing and/or polyadenylation of doublesex (dsx) pre-mRNA. Splicing requires an enhancer complex, dsxRE (dsx repeat element: which contains six copies of a 13-nucleotide repeat and a purine-rich enhancer (PRE)). DsxRE is formed through cooperative interactions between tra, tra2 and the sr proteins, and these interactions require both the repeat sequences and PRE. PRE is required for specific binding of tra2 to the dsxRE. Protein-RNA and protein-protein interactions are involved in tra-2 dependent activation and repression of alternative splicing. Together with tra-2, plays a role in switching fru splicing from the male-specific pattern to the female-specific pattern through activation of the female-specific fru 5'-splice site. This is Transformer-2 sex-determining protein (tra2) from Drosophila melanogaster (Fruit fly).